The sequence spans 478 residues: Growth/differentiation factor 10 (478 aa).

The first 33 residues, 1–33 (MARGPARTSLGPGSQQLPLLSLLLLLLLRDADG), serve as a signal peptide directing secretion. Positions 34–70 (SHTAAARPPPPAAADGLAGDKNPQRSPGDVAAAQSPG) are disordered. The propeptide occupies 34–368 (SHTAAARPPP…EKTMQKARKK (335 aa)). N-linked (GlcNAc...) asparagine glycosylation is found at Asn118, Asn155, and Asn280. Positions 267–345 (PFQAGDPEPG…GRKDRRKKGQ (79 aa)) are disordered. Positions 291-301 (TQATGPLQNNE) are enriched in polar residues. Basic residues predominate over residues 331 to 343 (LKPRPGRKDRRKK). Intrachain disulfides connect Cys376–Cys443, Cys405–Cys475, and Cys409–Cys477. An N-linked (GlcNAc...) asparagine glycan is attached at Asn469.

The protein belongs to the TGF-beta family. As to quaternary structure, homodimer or heterodimer. Can form a non-covalent complex of the mature region and the pro-region.

The protein resides in the secreted. Growth factor involved in osteogenesis and adipogenesis. Plays an inhibitory role in the process of osteoblast differentiation via SMAD2/3 pathway. Plays an inhibitory role in the process of adipogenesis. In Bos taurus (Bovine), this protein is Growth/differentiation factor 10 (GDF10).